The chain runs to 428 residues: Adenylosuccinate synthetase (428 aa).

GTP-binding positions include 12–18 and 40–42; these read GDEGKGK and GHT. The Proton acceptor role is filled by D13. The Mg(2+) site is built by D13 and G40. Residues 13 to 16, 38 to 41, T130, R144, Q225, T240, and R304 each bind IMP; these read DEGK and NAGH. Residue H41 is the Proton donor of the active site. Residue 300–306 coordinates substrate; sequence VTTGRSR. Residues R306, 332 to 334, and 414 to 416 each bind GTP; these read KID and GVG.

Belongs to the adenylosuccinate synthetase family. In terms of assembly, homodimer. Requires Mg(2+) as cofactor.

The protein localises to the cytoplasm. It catalyses the reaction IMP + L-aspartate + GTP = N(6)-(1,2-dicarboxyethyl)-AMP + GDP + phosphate + 2 H(+). It participates in purine metabolism; AMP biosynthesis via de novo pathway; AMP from IMP: step 1/2. Its function is as follows. Plays an important role in the de novo pathway of purine nucleotide biosynthesis. Catalyzes the first committed step in the biosynthesis of AMP from IMP. The sequence is that of Adenylosuccinate synthetase from Clostridium botulinum (strain Alaska E43 / Type E3).